A 172-amino-acid chain; its full sequence is Ribosome maturation factor RimM (172 aa).

Residues 94–167 form the PRC barrel domain; it reads ENEFYLFQLK…FIKVELLPGM (74 aa).

This sequence belongs to the RimM family. Binds ribosomal protein uS19.

The protein localises to the cytoplasm. Functionally, an accessory protein needed during the final step in the assembly of 30S ribosomal subunit, possibly for assembly of the head region. Essential for efficient processing of 16S rRNA. May be needed both before and after RbfA during the maturation of 16S rRNA. It has affinity for free ribosomal 30S subunits but not for 70S ribosomes. This Carboxydothermus hydrogenoformans (strain ATCC BAA-161 / DSM 6008 / Z-2901) protein is Ribosome maturation factor RimM.